A 490-amino-acid chain; its full sequence is MRRHDPIVAIASAAGRGAIGIVRVSGNALGALAQALCGRALQPRMATYLAFRDARGQPIDQGLALYFPGPHSYTGEDVLELQAHGGPVVLQLLLARCLEAGAGADPATGRPCLPGLRLAQPGEFTERAFLNDKIDLAQAEAIADLIDASTEAAARSASRSLSGAFSAGIHGLCDALIALRTLVEASLDFPEEETDFLHQADARGQLSRLRQALGAVLQQARQGALLRDGIEVVIAGQPNAGKSSLLNALAGAELAIVTPVAGTTRDKVQQTIQIEGVPLRIIDTAGLRASDDEVERIGIARSWEAMAAADAVLFLHDLARAQTPKYIADDAEIERALARKLPPGVAVIDVWNKLDCVAAPAELAAPTAPTESAAVPPASARPAPAPRPAVQLSARTGQGLDGLRRILLEVAGWQSVPEGICIARARHVQALQMAAAHLEQAADQLQARGAALELLAEELRLAQNALDSITGAFTSDDLLGAIFARFCIGK.

(6S)-5-formyl-5,6,7,8-tetrahydrofolate is bound by residues arginine 23, glutamate 80, and lysine 133. One can recognise a TrmE-type G domain in the interval 229–412; sequence GIEVVIAGQP…LRRILLEVAG (184 aa). Asparagine 239 serves as a coordination point for K(+). GTP contacts are provided by residues 239–244, 258–264, and 283–286; these read NAGKSS, TPVAGTT, and DTAG. Serine 243 serves as a coordination point for Mg(2+). K(+) is bound by residues threonine 258, valine 260, and threonine 263. A Mg(2+)-binding site is contributed by threonine 264. A compositionally biased stretch (low complexity) spans 366 to 382; that stretch reads PTAPTESAAVPPASARP. The segment at 366 to 388 is disordered; sequence PTAPTESAAVPPASARPAPAPRP. A GTP-binding site is contributed by 393 to 395; the sequence is SAR. (6S)-5-formyl-5,6,7,8-tetrahydrofolate is bound at residue lysine 490.

The protein belongs to the TRAFAC class TrmE-Era-EngA-EngB-Septin-like GTPase superfamily. TrmE GTPase family. As to quaternary structure, homodimer. Heterotetramer of two MnmE and two MnmG subunits. Requires K(+) as cofactor.

The protein localises to the cytoplasm. Exhibits a very high intrinsic GTPase hydrolysis rate. Involved in the addition of a carboxymethylaminomethyl (cmnm) group at the wobble position (U34) of certain tRNAs, forming tRNA-cmnm(5)s(2)U34. This Verminephrobacter eiseniae (strain EF01-2) protein is tRNA modification GTPase MnmE.